We begin with the raw amino-acid sequence, 384 residues long: Chorismate synthase (384 aa).

NADP(+) is bound by residues Arg-40 and Arg-46. Residues 127-129 (RTS), 247-248 (QA), Ala-292, 307-311 (KPIPT), and Arg-333 contribute to the FMN site.

This sequence belongs to the chorismate synthase family. In terms of assembly, homotetramer. Requires FMNH2 as cofactor.

It carries out the reaction 5-O-(1-carboxyvinyl)-3-phosphoshikimate = chorismate + phosphate. Its pathway is metabolic intermediate biosynthesis; chorismate biosynthesis; chorismate from D-erythrose 4-phosphate and phosphoenolpyruvate: step 7/7. Functionally, catalyzes the anti-1,4-elimination of the C-3 phosphate and the C-6 proR hydrogen from 5-enolpyruvylshikimate-3-phosphate (EPSP) to yield chorismate, which is the branch point compound that serves as the starting substrate for the three terminal pathways of aromatic amino acid biosynthesis. This reaction introduces a second double bond into the aromatic ring system. This Alkaliphilus oremlandii (strain OhILAs) (Clostridium oremlandii (strain OhILAs)) protein is Chorismate synthase.